The chain runs to 471 residues: UDP-glycosyltransferase 1 (471 aa).

His-15 acts as the Proton acceptor in catalysis. Residue His-15 coordinates an anthocyanidin. The active-site Charge relay is the Asp-124. Positions 146, 348, 350, 365, 368, 369, 370, and 373 each coordinate UDP-alpha-D-glucose. Ala-388 provides a ligand contact to an anthocyanidin. Residues Glu-389 and Gln-390 each contribute to the UDP-alpha-D-glucose site.

This sequence belongs to the UDP-glycosyltransferase family. Expressed in roots. Detected in stems and leaves.

It catalyses the reaction a 7-hydroxyisoflavone + UDP-alpha-D-glucose = a 7-hydroxyisoflavone 7-O-beta-D-glucoside + UDP + H(+). Isoflavone 7-O-glucosyltransferase converting daidzein to daidzin, genistein to genistin and formononetin to ononin. Shows some activity toward the chalcone isoliquiritigenin, the flavanones liquiritigenin and naringenin, and the flavone apigenin, but not toward cyanidin, luteolin, kaempferol, quercetin, daidzin and puerarin. The protein is UDP-glycosyltransferase 1 of Pueraria montana var. lobata (Kudzu vine).